The primary structure comprises 396 residues: Phosphopentomutase (396 aa).

Mn(2+)-binding residues include Asp-13, Asp-288, His-293, Asp-329, His-330, and His-341.

Belongs to the phosphopentomutase family. Mn(2+) is required as a cofactor.

Its subcellular location is the cytoplasm. It catalyses the reaction 2-deoxy-alpha-D-ribose 1-phosphate = 2-deoxy-D-ribose 5-phosphate. The enzyme catalyses alpha-D-ribose 1-phosphate = D-ribose 5-phosphate. It participates in carbohydrate degradation; 2-deoxy-D-ribose 1-phosphate degradation; D-glyceraldehyde 3-phosphate and acetaldehyde from 2-deoxy-alpha-D-ribose 1-phosphate: step 1/2. Functionally, isomerase that catalyzes the conversion of deoxy-ribose 1-phosphate (dRib-1-P) and ribose 1-phosphate (Rib-1-P) to deoxy-ribose 5-phosphate (dRib-5-P) and ribose 5-phosphate (Rib-5-P), respectively. The polypeptide is Phosphopentomutase (Clostridium perfringens (strain 13 / Type A)).